We begin with the raw amino-acid sequence, 236 residues long: Peroxisomal membrane protein PMP27 (236 aa).

This sequence belongs to the peroxin-11 family. Homooligomer. Interacts with PEX34.

It localises to the peroxisome membrane. Its function is as follows. Involved in peroxisomal proliferation. Promotes peroxisome division and biogenesis. This chain is Peroxisomal membrane protein PMP27 (PEX11), found in Saccharomyces cerevisiae (strain ATCC 204508 / S288c) (Baker's yeast).